The sequence spans 349 residues: tRNA uridine(34) hydroxylase (349 aa).

Residues 146–240 (DDPDAVFIDM…YARRAREQGL (95 aa)) form the Rhodanese domain. The active-site Cysteine persulfide intermediate is Cys200. Over residues 316–328 (EEQRRRRAGRENG) the composition is skewed to basic and acidic residues. The tract at residues 316-349 (EEQRRRRAGRENGNKIFNKSRGRLNTKLGIPDPE) is disordered.

Belongs to the TrhO family.

The enzyme catalyses uridine(34) in tRNA + AH2 + O2 = 5-hydroxyuridine(34) in tRNA + A + H2O. Its function is as follows. Catalyzes oxygen-dependent 5-hydroxyuridine (ho5U) modification at position 34 in tRNAs. The chain is tRNA uridine(34) hydroxylase from Enterobacter sp. (strain 638).